The chain runs to 149 residues: Lipoprotein MlpF (149 aa).

The signal sequence occupies residues 1 to 17; it reads MKIINILFCLFLLLLNS. The N-palmitoyl cysteine moiety is linked to residue Cys18. Cys18 is lipidated: S-diacylglycerol cysteine. The tract at residues 26 to 58 is disordered; it reads LKNNAQQTKSRGKRDLTQKEATPEKPKSKEELL. The segment covering 38 to 58 has biased composition (basic and acidic residues); the sequence is KRDLTQKEATPEKPKSKEELL.

The protein belongs to the Multicopy lipoprotein (Mlp) family.

The protein localises to the cell outer membrane. An outer membrane protein that may participate in pathogenesis. Some human Lyme disease patients have antibodies against this protein. The Mlp proteins probably undergo intragenic recombination, generating new alleles. The sequence is that of Lipoprotein MlpF from Borreliella burgdorferi (strain ATCC 35210 / DSM 4680 / CIP 102532 / B31) (Borrelia burgdorferi).